We begin with the raw amino-acid sequence, 124 residues long: Small ribosomal subunit protein bS6 (124 aa).

Residues 96 to 124 (ETGPSPMMKEVQREEAKKAAAAQPTEAQA) form a disordered region. Low complexity predominate over residues 114 to 124 (AAAAQPTEAQA).

Belongs to the bacterial ribosomal protein bS6 family.

Binds together with bS18 to 16S ribosomal RNA. The chain is Small ribosomal subunit protein bS6 from Burkholderia lata (strain ATCC 17760 / DSM 23089 / LMG 22485 / NCIMB 9086 / R18194 / 383).